Here is a 1201-residue protein sequence, read N- to C-terminus: Potassium channel subfamily T member 1 (1201 aa).

The disordered stretch occupies residues 1–28 (MARAKLKNSPSESNSHVKTVPPATTEDV). The Cytoplasmic portion of the chain corresponds to 1–92 (MARAKLKNSP…FFIKNQRSSL (92 aa)). Residues 8 to 17 (NSPSESNSHV) show a composition bias toward polar residues. A helical membrane pass occupies residues 93–115 (RIRLFNFSLKLLTCLLYIVRVLL). Over 116 to 152 (DNPEEGIGCWECEKQNYTLFNQSTKINWSHIFWVDRK) the chain is Extracellular. Asparagine 131 and asparagine 136 each carry an N-linked (GlcNAc...) asparagine glycan. The chain crosses the membrane as a helical span at residues 153–175 (LPLWAVQVSIALISFLETMLLIY). Topologically, residues 176–184 (LSYKGNIWE) are cytoplasmic. Residues 185-206 (QIFRISFILEMINTVPFIITIF) form a helical membrane-spanning segment. The Extracellular portion of the chain corresponds to 207–216 (WPPLRNLFIP). Residues 217–229 (VFLNCWLAKYALE) traverse the membrane as a helical segment. At 230 to 249 (NMINDLHRAIQRTQSAMFNQ) the chain is on the cytoplasmic side. Residues 250–272 (VLILICTLLCLVFTGTCGIQHLE) form a helical membrane-spanning segment. Topologically, residues 273–279 (RAGEKLS) are extracellular. An intramembrane region (pore-forming) is located at residues 280-300 (LFKSFYFCIVTFSTVGYGDVT). K(+)-binding residues include valine 294 and glycine 295. The Extracellular portion of the chain corresponds to 301–304 (PKIW). A helical membrane pass occupies residues 305-326 (PSQLLVVIMICVALVVLPLQFE). The Cytoplasmic portion of the chain corresponds to 327–1201 (ELVYLWMERQ…NPETRDETQL (875 aa)). Positions 350–486 (EKHVVLCVSS…FHVKFADHVV (137 aa)) constitute an RCK N-terminal 1 domain. Leucine 511, histidine 514, serine 536, and asparagine 538 together coordinate Na(+). Zn(2+) contacts are provided by cysteine 750 and cysteine 751. K(+) contacts are provided by arginine 753 and lysine 756. Residues arginine 753 and lysine 756 each coordinate Na(+). The Zn(2+) site is built by cysteine 758 and histidine 760. K(+) contacts are provided by asparagine 761, tyrosine 769, and glycine 770. Phenylalanine 771 contacts Na(+). Residues 773-913 (NKLIIVSAET…QFRAKDSYSL (141 aa)) enclose the RCK N-terminal 2 domain. The K(+) site is built by serine 779, leucine 810, aspartate 812, glycine 834, and aspartate 857. Residues 1175–1201 (NDGHSRKSSCSNKLGPCNPETRDETQL) are disordered.

The protein belongs to the potassium channel family. Calcium-activated (TC 1.A.1.3) subfamily. KCa4.1/KCNT1 sub-subfamily. In terms of assembly, homotetramer; which constitutes the Na(+)-activated K(+) channel. Interacts with KCNT2; these heterodimer channels differ from the homomers in their unitary conductance, kinetic behavior, subcellular localization, and response to activation of protein kinase C. Phosphorylated by protein kinase C. Phosphorylation of the C-terminal domain increases channel activity.

Its subcellular location is the cell membrane. The enzyme catalyses K(+)(in) = K(+)(out). Activated by high intracellular Na(+). In addition to activation by Na(+), is cooperatively activated by intracellular Cl(-) levels. Inhibited by Zn(2+). Activated upon stimulation of G-protein coupled receptors, such as CHRM1 and GRIA1. Its function is as follows. Sodium-activated K(+) channel. Acts as an important mediator of neuronal membrane excitability. Contributes to the delayed outward currents. Regulates of neuronal bursting in sensory neurons. Contributes to synaptic development and plasticity. The protein is Potassium channel subfamily T member 1 (KCNT1) of Gallus gallus (Chicken).